The following is a 185-amino-acid chain: GTP cyclohydrolase 1 (185 aa).

Zn(2+)-binding residues include C76, H79, and C147.

This sequence belongs to the GTP cyclohydrolase I family. As to quaternary structure, toroid-shaped homodecamer, composed of two pentamers of five dimers.

It catalyses the reaction GTP + H2O = 7,8-dihydroneopterin 3'-triphosphate + formate + H(+). It participates in cofactor biosynthesis; 7,8-dihydroneopterin triphosphate biosynthesis; 7,8-dihydroneopterin triphosphate from GTP: step 1/1. The sequence is that of GTP cyclohydrolase 1 from Clostridium perfringens (strain ATCC 13124 / DSM 756 / JCM 1290 / NCIMB 6125 / NCTC 8237 / Type A).